Here is a 449-residue protein sequence, read N- to C-terminus: Trigger factor (449 aa).

In terms of domain architecture, PPIase FKBP-type spans 162–247; the sequence is GDTVTIDYTG…IHEVKSKELP (86 aa). A compositionally biased stretch (basic residues) spans 427-438; the sequence is AKKATKKSTAKK. The segment at 427 to 449 is disordered; sequence AKKATKKSTAKKSTKEDEKKADK. Residues 439–449 show a composition bias toward basic and acidic residues; the sequence is STKEDEKKADK.

Belongs to the FKBP-type PPIase family. Tig subfamily.

The protein localises to the cytoplasm. The catalysed reaction is [protein]-peptidylproline (omega=180) = [protein]-peptidylproline (omega=0). In terms of biological role, involved in protein export. Acts as a chaperone by maintaining the newly synthesized protein in an open conformation. Functions as a peptidyl-prolyl cis-trans isomerase. The protein is Trigger factor of Lactobacillus gasseri (strain ATCC 33323 / DSM 20243 / BCRC 14619 / CIP 102991 / JCM 1131 / KCTC 3163 / NCIMB 11718 / NCTC 13722 / AM63).